The following is a 212-amino-acid chain: Protein GrpE (212 aa).

Residues 1–69 (MAEMSNNKTS…LESAKKEIES (69 aa)) form a disordered region. The span at 40-60 (ETTQTESMETAETETSLQTEL) shows a compositional bias: low complexity.

The protein belongs to the GrpE family. Homodimer.

Its subcellular location is the cytoplasm. In terms of biological role, participates actively in the response to hyperosmotic and heat shock by preventing the aggregation of stress-denatured proteins, in association with DnaK and GrpE. It is the nucleotide exchange factor for DnaK and may function as a thermosensor. Unfolded proteins bind initially to DnaJ; upon interaction with the DnaJ-bound protein, DnaK hydrolyzes its bound ATP, resulting in the formation of a stable complex. GrpE releases ADP from DnaK; ATP binding to DnaK triggers the release of the substrate protein, thus completing the reaction cycle. Several rounds of ATP-dependent interactions between DnaJ, DnaK and GrpE are required for fully efficient folding. This is Protein GrpE from Leptospira interrogans serogroup Icterohaemorrhagiae serovar Lai (strain 56601).